The sequence spans 577 residues: MRGFTYLSKVLHSHSSYSKLLVLCSVSTGGLLVYAESNVESGKQVVEQNQPESKKKRVVVLGTGWGGTSFLKDVDISSYDVQVVSPRNYFAFTPLLPSVTCGTVEARSIVEPVRNIIKKRSGEIQFWEAECLKIDPENRTVSCRSGINDNLAGQNDFSLQYDYLVVAVGAQVNTFNTPGVMEHCHFLKEVEDAQRIRRTVIDCFEKSVIPGLSEEERRTNLHFVIVGGGPTGVEFAAELHDYVYEDLVKIYPSVKDFVKITVIQSGDHILNTFDERISSFAEQKFQRDGIEVSTGCRVTSVSDHFINMKVKSTGKHVEVPYGMVVWSTGVGTRPFVKDFMEQVGQEKRRILATDEWLRVKGCSNVYALGDCASIDQRKVMEDISAIFKAADKDDSGTLSIEEFRDVLEDIIIRYPQVDLYLKNKHLLEAKDLFRDSEGNEREEVDIEGFKLALSHVDSQMKSLPATAQVAAQQGTYLSRCLNRWDQCKSNPEGPRHFKSSGRHEFLPFEYRHLGQFAPLGGDQAAAELPGDWVSMGHSTQWLWYSVYASKQVSWRTRYLVVGDWVRRYIFGRDSSRI.

Residues 1–35 constitute a mitochondrion transit peptide; it reads MRGFTYLSKVLHSHSSYSKLLVLCSVSTGGLLVYA. 57–87 provides a ligand contact to FAD; sequence RVVVLGTGWGGTSFLKDVDISSYDVQVVSPR. Position 221–257 (221–257) interacts with NAD(+); the sequence is LHFVIVGGGPTGVEFAAELHDYVYEDLVKIYPSVKDF. The 36-residue stretch at 378–413 folds into the EF-hand domain; sequence KVMEDISAIFKAADKDDSGTLSIEEFRDVLEDIIIR. Ca(2+) contacts are provided by Asp391, Asp393, Ser395, Thr397, and Glu402. A Microbody targeting signal motif is present at residues 568–577; sequence YIFGRDSSRI.

Belongs to the NADH dehydrogenase family. FAD is required as a cofactor.

The protein resides in the mitochondrion inner membrane. It is found in the peroxisome. It catalyses the reaction a quinone + NADH + H(+) = a quinol + NAD(+). The catalysed reaction is a ubiquinone + NADH + H(+) = a ubiquinol + NAD(+). With respect to regulation, activity is calcium-dependent with a more pronounced effect at higher pH. In terms of biological role, alternative NADH-ubiquinone oxidoreductase which catalyzes the oxidation of mitochondrial NADH does not translocate protons across the inner mitochondrial membrane. Calcium-dependent NAD(P)H dehydrogenase. Binds calcium ions. This is External alternative NAD(P)H-ubiquinone oxidoreductase B1, mitochondrial (NDB1) from Solanum tuberosum (Potato).